Here is a 286-residue protein sequence, read N- to C-terminus: Aspartate-semialdehyde dehydrogenase (286 aa).

Residues 10-13 (RGMV), 37-38 (TS), and Q74 contribute to the NADP(+) site. R103 is a phosphate binding site. C136 serves as the catalytic Acyl-thioester intermediate. A substrate-binding site is contributed by Q163. Residues 166–167 (SG) and P194 contribute to the NADP(+) site. E242 serves as a coordination point for substrate. K245 provides a ligand contact to phosphate. R269 provides a ligand contact to substrate. H276 acts as the Proton acceptor in catalysis.

This sequence belongs to the aspartate-semialdehyde dehydrogenase family. In terms of assembly, homodimer.

It carries out the reaction L-aspartate 4-semialdehyde + phosphate + NADP(+) = 4-phospho-L-aspartate + NADPH + H(+). The protein operates within amino-acid biosynthesis; L-lysine biosynthesis via DAP pathway; (S)-tetrahydrodipicolinate from L-aspartate: step 2/4. It functions in the pathway amino-acid biosynthesis; L-methionine biosynthesis via de novo pathway; L-homoserine from L-aspartate: step 2/3. Its pathway is amino-acid biosynthesis; L-threonine biosynthesis; L-threonine from L-aspartate: step 2/5. Functionally, catalyzes the NADPH-dependent formation of L-aspartate-semialdehyde (L-ASA) by the reductive dephosphorylation of L-aspartyl-4-phosphate. This is Aspartate-semialdehyde dehydrogenase (asd) from Actinobacillus pleuropneumoniae (Haemophilus pleuropneumoniae).